We begin with the raw amino-acid sequence, 838 residues long: DNA gyrase subunit A (838 aa).

The Topo IIA-type catalytic domain occupies 41–510 (LPEVRDGLKP…ADGDVSDEDL (470 aa)). The active-site O-(5'-phospho-DNA)-tyrosine intermediate is Tyr-129. The GyrA-box signature appears at 537–543 (QKRGGKG).

This sequence belongs to the type II topoisomerase GyrA/ParC subunit family. As to quaternary structure, heterotetramer, composed of two GyrA and two GyrB chains. In the heterotetramer, GyrA contains the active site tyrosine that forms a transient covalent intermediate with DNA, while GyrB binds cofactors and catalyzes ATP hydrolysis. Mg(2+) is required as a cofactor.

The protein localises to the cytoplasm. It carries out the reaction ATP-dependent breakage, passage and rejoining of double-stranded DNA.. With respect to regulation, DNA supercoiling is inhibited by EDTA, novobiocin, coumermycin and ciprofloxacin. In terms of biological role, a type II topoisomerase that negatively supercoils closed circular double-stranded (ds) DNA in an ATP-dependent manner to modulate DNA topology and maintain chromosomes in an underwound state. Also catalyzes the interconversion of other topological isomers of double-stranded DNA rings, including catenanes and knotted rings. Relaxes negatively supercoiled DNA in an ATP-independent manner. A linear reaction intermediate can be trapped in the presence of the antibiotic ciprofloxacin. Negative supercoiling favors strand separation, and DNA replication, transcription, recombination and repair, all of which involve strand separation. Type II topoisomerases break and join 2 DNA strands simultaneously in an ATP-dependent manner. The chain is DNA gyrase subunit A from Mycobacterium bovis (strain BCG / Pasteur 1173P2).